A 291-amino-acid polypeptide reads, in one-letter code: MATNAGYLRCKEERKNESFFKVVQSINVSSENKRALPHDFSRSFTDKELSRKMKIRAQWGNSWEVGISKNPRFYFMEKSGWEKFVRDNALGNSELLTFTHKGKMHFTVNIFKLDGKEMMQPPQSRSFFASSSRIKTEQEENDIKEEVVVSSNRGQTTAAESKGRKLNLGKRAAKESQSSKRTEKVVRARSDYAGASSSTAAAFTILFKQGYLVFLRIPNSVSKDQVPDEKTVFKIHHPNGKKSWNVVYLERFGAFSGGWRRVVKEYPLAVGDTCKFTFIKPKELLLVVSKP.

Positions 19–114 (FFKVVQSINV…HFTVNIFKLD (96 aa)) form a DNA-binding region, TF-B3 1. Residues 149–159 (VSSNRGQTTAA) show a composition bias toward polar residues. Residues 149–182 (VSSNRGQTTAAESKGRKLNLGKRAAKESQSSKRT) form a disordered region. Basic and acidic residues predominate over residues 172 to 182 (AAKESQSSKRT). Residues 200-291 (AAAFTILFKQ…KELLLVVSKP (92 aa)) constitute a DNA-binding region (TF-B3 2).

The protein localises to the nucleus. This chain is B3 domain-containing protein At2g16210, found in Arabidopsis thaliana (Mouse-ear cress).